Reading from the N-terminus, the 428-residue chain is Forkhead box protein B2 (428 aa).

Residues Gln12–Leu103 constitute a DNA-binding region (fork-head). Disordered regions lie at residues His118–Ala217 and Pro408–Ser428. Positions Leu136–Pro163 are enriched in basic residues. 2 stretches are compositionally biased toward pro residues: residues Pro164 to Met174 and Ala183 to Pro192. A compositionally biased stretch (low complexity) spans Ser193–Ala217.

The protein localises to the nucleus. In terms of biological role, transcription factor. The protein is Forkhead box protein B2 (Foxb2) of Mus musculus (Mouse).